A 253-amino-acid chain; its full sequence is Chloride intracellular channel protein 4 (253 aa).

A2 carries the post-translational modification N-acetylalanine. Residues 2–101 form a required for insertion into the membrane region; that stretch reads ALSMPLNGLK…EEFLEEVLCP (100 aa). A Phosphoserine modification is found at S4. K24 carries the N6-acetyllysine modification. A helical transmembrane segment spans residues 37–57; sequence FSQRLFMILWLKGVVFSVSTV. Positions 81 to 244 constitute a GST C-terminal domain; the sequence is NSEVKTDVNK…PSDKEVEIAY (164 aa). K130 is modified (N6-acetyllysine). S132, S167, and S236 each carry phosphoserine. At Y244 the chain carries Phosphotyrosine.

Belongs to the chloride channel CLIC family. In terms of assembly, monomer. Interacts with HRH3.

It localises to the cytoplasm. Its subcellular location is the cytoskeleton. The protein resides in the microtubule organizing center. The protein localises to the centrosome. It is found in the cytoplasmic vesicle membrane. It localises to the nucleus. Its subcellular location is the cell membrane. The protein resides in the mitochondrion. The protein localises to the cell junction. It carries out the reaction chloride(in) = chloride(out). The enzyme catalyses thiocyanate(in) = thiocyanate(out). It catalyses the reaction nitrate(in) = nitrate(out). The catalysed reaction is iodide(out) = iodide(in). It carries out the reaction bromide(in) = bromide(out). The enzyme catalyses fluoride(in) = fluoride(out). It catalyses the reaction choline(out) = choline(in). In the soluble state, catalyzes glutaredoxin-like thiol disulfide exchange reactions with reduced glutathione as electron donor. Can insert into membranes and form voltage-dependent multi-ion conductive channels. Membrane insertion seems to be redox-regulated and may occur only under oxidizing conditions. Has alternate cellular functions like a potential role in angiogenesis or in maintaining apical-basolateral membrane polarity during mitosis and cytokinesis. Could also promote endothelial cell proliferation and regulate endothelial morphogenesis (tubulogenesis). Promotes cell-surface expression of HRH3. The protein is Chloride intracellular channel protein 4 (CLIC4) of Pongo abelii (Sumatran orangutan).